The sequence spans 1040 residues: Multidrug resistance protein MdtB (1040 aa).

Helical transmembrane passes span 15-37 (LFIL…GIIG), 345-362 (FELM…YLFL), 367-389 (ATII…MVFL), 396-418 (LTLM…VIEN), 438-460 (GEIG…PLLF), 472-494 (FAVT…TPMM), 535-557 (HPWL…WITI), 867-889 (VWLI…ESFI), 909-931 (LIIA…IGIV), 968-990 (ILMT…GVGA), and 1000-1022 (MVGG…YLLF).

The protein belongs to the resistance-nodulation-cell division (RND) (TC 2.A.6) family. MdtB subfamily. As to quaternary structure, part of a tripartite efflux system composed of MdtA, MdtB and MdtC. MdtB forms a heteromultimer with MdtC.

Its subcellular location is the cell inner membrane. The sequence is that of Multidrug resistance protein MdtB from Salmonella typhi.